Consider the following 474-residue polypeptide: Trigger factor (474 aa).

The region spanning 174 to 261 (GDIAVVSFKG…LKDLKEKELP (88 aa)) is the PPIase FKBP-type domain. The segment at 435-474 (VKEKTTKTSKATKTSKTTKATKTASKTTKTTKTQNKKEKK) is disordered. The span at 442-467 (TSKATKTSKTTKATKTASKTTKTTKT) shows a compositional bias: low complexity.

This sequence belongs to the FKBP-type PPIase family. Tig subfamily.

Its subcellular location is the cytoplasm. The enzyme catalyses [protein]-peptidylproline (omega=180) = [protein]-peptidylproline (omega=0). Involved in protein export. Acts as a chaperone by maintaining the newly synthesized protein in an open conformation. Functions as a peptidyl-prolyl cis-trans isomerase. The chain is Trigger factor from Prochlorococcus marinus (strain AS9601).